The primary structure comprises 457 residues: Siroheme synthase (457 aa).

Residues 1-204 are precorrin-2 dehydrogenase /sirohydrochlorin ferrochelatase; the sequence is MDHLPIFCQL…ADEKAVNATT (204 aa). NAD(+) is bound by residues 22-23 and 43-44; these read DV and LT. Ser-128 bears the Phosphoserine mark. Residues 216–457 are uroporphyrinogen-III C-methyltransferase; sequence GEVVLVGAGP…RDKLNWFSNH (242 aa). Pro-225 is a binding site for S-adenosyl-L-methionine. Asp-248 serves as the catalytic Proton acceptor. Lys-270 (proton donor) is an active-site residue. Residues 301–303, Ile-306, 331–332, Met-382, and Gly-411 each bind S-adenosyl-L-methionine; these read GGD and TA.

It in the N-terminal section; belongs to the precorrin-2 dehydrogenase / sirohydrochlorin ferrochelatase family. The protein in the C-terminal section; belongs to the precorrin methyltransferase family.

It catalyses the reaction uroporphyrinogen III + 2 S-adenosyl-L-methionine = precorrin-2 + 2 S-adenosyl-L-homocysteine + H(+). It carries out the reaction precorrin-2 + NAD(+) = sirohydrochlorin + NADH + 2 H(+). The catalysed reaction is siroheme + 2 H(+) = sirohydrochlorin + Fe(2+). It functions in the pathway cofactor biosynthesis; adenosylcobalamin biosynthesis; precorrin-2 from uroporphyrinogen III: step 1/1. Its pathway is cofactor biosynthesis; adenosylcobalamin biosynthesis; sirohydrochlorin from precorrin-2: step 1/1. It participates in porphyrin-containing compound metabolism; siroheme biosynthesis; precorrin-2 from uroporphyrinogen III: step 1/1. The protein operates within porphyrin-containing compound metabolism; siroheme biosynthesis; siroheme from sirohydrochlorin: step 1/1. It functions in the pathway porphyrin-containing compound metabolism; siroheme biosynthesis; sirohydrochlorin from precorrin-2: step 1/1. In terms of biological role, multifunctional enzyme that catalyzes the SAM-dependent methylations of uroporphyrinogen III at position C-2 and C-7 to form precorrin-2 via precorrin-1. Then it catalyzes the NAD-dependent ring dehydrogenation of precorrin-2 to yield sirohydrochlorin. Finally, it catalyzes the ferrochelation of sirohydrochlorin to yield siroheme. The polypeptide is Siroheme synthase (Salmonella typhi).